The chain runs to 248 residues: Ubiquinone biosynthesis O-methyltransferase (248 aa).

4 residues coordinate S-adenosyl-L-methionine: arginine 41, glycine 72, aspartate 93, and methionine 136.

The protein belongs to the methyltransferase superfamily. UbiG/COQ3 family.

It carries out the reaction a 3-demethylubiquinol + S-adenosyl-L-methionine = a ubiquinol + S-adenosyl-L-homocysteine + H(+). The catalysed reaction is a 3-(all-trans-polyprenyl)benzene-1,2-diol + S-adenosyl-L-methionine = a 2-methoxy-6-(all-trans-polyprenyl)phenol + S-adenosyl-L-homocysteine + H(+). It participates in cofactor biosynthesis; ubiquinone biosynthesis. Functionally, O-methyltransferase that catalyzes the 2 O-methylation steps in the ubiquinone biosynthetic pathway. The protein is Ubiquinone biosynthesis O-methyltransferase of Sinorhizobium fredii (strain NBRC 101917 / NGR234).